Consider the following 462-residue polypeptide: dTDP-4-dehydro-2,6-dideoxy-D-glucose 3-dehydratase (462 aa).

Residues 112–113 (GS), aspartate 220, and serine 241 each bind pyridoxal 5'-phosphate. The Proton donor/acceptor role is filled by histidine 246. Asparagine 314 provides a ligand contact to pyridoxal 5'-phosphate.

Belongs to the DegT/DnrJ/EryC1 family. Homodimer. It depends on pyridoxal 5'-phosphate as a cofactor.

It catalyses the reaction dTDP-4-dehydro-2,6-dideoxy-alpha-D-glucose + 2 reduced [2Fe-2S]-[ferredoxin] + 2 H(+) = dTDP-4-dehydro-2,3,6-trideoxy-alpha-D-hexopyranose + 2 oxidized [2Fe-2S]-[ferredoxin] + H2O. Functionally, involved in the biosynthesis of forosamine ((4-dimethylamino)-2,3,4,6-tetradeoxy-alpha-D-threo-hexopyranose), a highly deoxygenated sugar component of several bioactive natural products such as the insecticidal spinosyns A and D. Catalyzes C-3 deoxygenation of dTDP-4-keto-2,6-dideoxy-alpha-D-glucose to yield dTDP-4-keto-2,3,6-trideoxy-D-glucose via a combined transamination-deoxygenation reaction. The catalysis is initiated by a transamination step in which pyridoxal 5'-phosphate (PLP) is converted to pyridoxamine 5'-phosphate (PMP) in the presence of L-glutamate. This coenzyme then forms a Schiff base with dTDP-4-keto-2,6-dideoxy-alpha-D-glucose and the resulting adduct undergoes a PMP-mediated beta-dehydration reaction to give a sugar enamine intermediate, which after a 2 electrons reduction and hydrolysis yields dTDP-4-keto-2,3,6-trideoxy-D-glucose as a product. Requires cellular reductase (ferredoxin or flavodoxin reductase) rather than a specific partner reductase. L-glutamate is 20-fold more efficient than L-aspartate as an amino donor. In the absence of an electron source and in the presence of L-glutamate, catalyzes a transamination reaction, converting dTDP-4-keto-2,6-dideoxy-alpha-D-glucose to dTDP-4-amino-2,4,6-trideoxy-D-glucose. In Saccharopolyspora spinosa, this protein is dTDP-4-dehydro-2,6-dideoxy-D-glucose 3-dehydratase.